We begin with the raw amino-acid sequence, 146 residues long: Histone H2A.1 (146 aa).

M1 bears the N-acetylmethionine mark. The tract at residues 1-24 is disordered; the sequence is MDATKTTKGAGGRKGGPRKKSVTK. The short motif at 142–145 is the SPKK motif element; that stretch reads SPKK.

It belongs to the histone H2A family. As to quaternary structure, the nucleosome is a histone octamer containing two molecules each of H2A, H2B, H3 and H4 assembled in one H3-H4 heterotetramer and two H2A-H2B heterodimers. The octamer wraps approximately 147 bp of DNA. In terms of tissue distribution, high expression in meristematic tissues, in cells of the root pericycle and in shoot cortical cells undergoing endoduplication of their DNA.

The protein resides in the nucleus. It localises to the chromosome. Its function is as follows. Core component of nucleosome. Nucleosomes wrap and compact DNA into chromatin, limiting DNA accessibility to the cellular machineries which require DNA as a template. Histones thereby play a central role in transcription regulation, DNA repair, DNA replication and chromosomal stability. DNA accessibility is regulated via a complex set of post-translational modifications of histones, also called histone code, and nucleosome remodeling. The sequence is that of Histone H2A.1 from Solanum lycopersicum (Tomato).